The chain runs to 161 residues: Mediator of RNA polymerase II transcription subunit 10 (161 aa).

This sequence belongs to the Mediator complex subunit 10 family. Component of the Mediator complex.

The protein localises to the nucleus. In terms of biological role, component of the Mediator complex, a coactivator involved in the regulated transcription of nearly all RNA polymerase II-dependent genes. Mediator functions as a bridge to convey information from gene-specific regulatory proteins to the basal RNA polymerase II transcription machinery. Mediator is recruited to promoters by direct interactions with regulatory proteins and serves as a scaffold for the assembly of a functional preinitiation complex with RNA polymerase II and the general transcription factors. This is Mediator of RNA polymerase II transcription subunit 10 (NUT2) from Kluyveromyces lactis (strain ATCC 8585 / CBS 2359 / DSM 70799 / NBRC 1267 / NRRL Y-1140 / WM37) (Yeast).